Here is a 251-residue protein sequence, read N- to C-terminus: Imidazole glycerol phosphate synthase subunit HisF (251 aa).

Residues Asp-11 and Asp-130 contribute to the active site.

The protein belongs to the HisA/HisF family. In terms of assembly, heterodimer of HisH and HisF.

The protein resides in the cytoplasm. It carries out the reaction 5-[(5-phospho-1-deoxy-D-ribulos-1-ylimino)methylamino]-1-(5-phospho-beta-D-ribosyl)imidazole-4-carboxamide + L-glutamine = D-erythro-1-(imidazol-4-yl)glycerol 3-phosphate + 5-amino-1-(5-phospho-beta-D-ribosyl)imidazole-4-carboxamide + L-glutamate + H(+). It functions in the pathway amino-acid biosynthesis; L-histidine biosynthesis; L-histidine from 5-phospho-alpha-D-ribose 1-diphosphate: step 5/9. IGPS catalyzes the conversion of PRFAR and glutamine to IGP, AICAR and glutamate. The HisF subunit catalyzes the cyclization activity that produces IGP and AICAR from PRFAR using the ammonia provided by the HisH subunit. This is Imidazole glycerol phosphate synthase subunit HisF from Listeria monocytogenes serotype 4b (strain CLIP80459).